The sequence spans 520 residues: Putative lipase ATG15 (520 aa).

Topologically, residues 1–14 are cytoplasmic; it reads MLHKSPSRKRFASP. The helical; Signal-anchor for type II membrane protein transmembrane segment at 15 to 35 threads the bilayer; that stretch reads LHLGCILTLTVLCLIAYYFAL. The Lumenal portion of the chain corresponds to 36–520; the sequence is PDYLSVGKSS…WLGFCTKYEL (485 aa). N-linked (GlcNAc...) asparagine glycans are attached at residues Asn-173, Asn-202, and Asn-208. The Charge relay system role is filled by Ser-332.

This sequence belongs to the AB hydrolase superfamily. Lipase family. Binds to both phosphatidylinositol (PI) and phosphatidylinositol 3,5-bisphosphate (PIP2). In terms of processing, glycosylated.

The protein localises to the endosome. The protein resides in the multivesicular body membrane. It is found in the prevacuolar compartment membrane. It catalyses the reaction a triacylglycerol + H2O = a diacylglycerol + a fatty acid + H(+). Lipase which is essential for lysis of subvacuolar cytoplasm to vacuole targeted bodies and intravacuolar autophagic bodies. Involved in the lysis of intravacuolar multivesicular body (MVB) vesicles. The intravacuolar membrane disintegration by ATG15 is critical to life span extension. This is Putative lipase ATG15 (ATG15) from Saccharomyces cerevisiae (strain ATCC 204508 / S288c) (Baker's yeast).